A 543-amino-acid polypeptide reads, in one-letter code: Zinc finger protein egl-43 (543 aa).

The positive regulatory (PR) domain stretch occupies residues 2–62 (SIDTDFLTSV…NLIKEADDGE (61 aa)). 2 consecutive C2H2-type zinc fingers follow at residues 159-181 (HKCG…SHIH) and 187-209 (FRCH…RRVH). The segment at 213-233 (WTCPTCQSQMPSQAALTKHRP) adopts a C2H2-type 3; atypical zinc-finger fold. Residues 299 to 380 (PDAECSSGHA…TSTKKRPTSH (82 aa)) are disordered. Residues 306-317 (GHASESSPTTTE) show a composition bias toward polar residues. The segment covering 335–348 (TTSKSDDGEDRDSI) has biased composition (basic and acidic residues). 2 C2H2-type zinc fingers span residues 444-466 (YTCK…LRTH) and 472-495 (YKCQ…RNIH). The segment at 496 to 543 (NKPNTSLTPHNHHRQRSLHNSTSTSTTTTTVHHPLLHLPGTSVPVPKV) is disordered. Positions 513 to 533 (LHNSTSTSTTTTTVHHPLLHL) are enriched in low complexity.

It localises to the nucleus. Functionally, probable transcription factor, required for migration of the hermaphrodite-specific motor neurons (HSNs) from the tail to the gonad primordium during HSN cell differentiation. Required for phasmid neuron development. Required to specify the pi-cell fate of ventral uterine precursor cell (VU) cells. Its function is as follows. Probable transcription factor, involved in lin-12 (Notch)-dependent anchor cell (AC) and ventral uterine (VU) precursor cell fate specification and in AC invasion. Prevents AC proliferation after AC cell specification by repressing lin-12 expression. May form a positive feedback loop, together with the transcription factor fos-1, that maintains mutual high levels of expression and so activates AC invasion. In terms of biological role, dispensable for anchor cell (AC) invasion and for preventing AC proliferation. This chain is Zinc finger protein egl-43, found in Caenorhabditis elegans.